Consider the following 94-residue polypeptide: Elongation factor 1-beta (94 aa).

Belongs to the EF-1-beta/EF-1-delta family.

Its function is as follows. Promotes the exchange of GDP for GTP in EF-1-alpha/GDP, thus allowing the regeneration of EF-1-alpha/GTP that could then be used to form the ternary complex EF-1-alpha/GTP/AAtRNA. The protein is Elongation factor 1-beta of Ignicoccus hospitalis (strain KIN4/I / DSM 18386 / JCM 14125).